The chain runs to 564 residues: Diacylglycerol kinase epsilon (564 aa).

Residues 20-40 form a helical membrane-spanning segment; the sequence is LVLWTLCSVLLPVFITLWCSL. 2 consecutive Phorbol-ester/DAG-type zinc fingers follow at residues 57 to 106 and 121 to 174; these read KHCW…RFPC and PHHW…SEKC. Residues 212-353 form the DAGKc domain; the sequence is KQWTPLIILA…LDRWKVQVTN (142 aa).

Belongs to the eukaryotic diacylglycerol kinase family. Highly expressed in brain and heart. In brain, highly expressed in Purkinje cells of the cerebellum, pyramidal cells of the hippocampus, mitral cells of the olfactory bulb, and neurons of the substantia nigra. Lower expression in neurons of the thalamus, superior olive, and lateral reticular nucleus is also detected. Expressed in platelets.

The protein localises to the membrane. Its subcellular location is the cytoplasm. It catalyses the reaction a 1,2-diacyl-sn-glycerol + ATP = a 1,2-diacyl-sn-glycero-3-phosphate + ADP + H(+). The enzyme catalyses 1-hexadecanoyl-2-(5Z,8Z,11Z,14Z-eicosatetraenoyl)-sn-glycerol + ATP = 1-hexadecanoyl-2-(5Z,8Z,11Z,14Z-eicosatetraenoyl)-sn-glycero-3-phosphate + ADP + H(+). The catalysed reaction is 1-octadecanoyl-2-(5Z,8Z,11Z,14Z-eicosatetraenoyl)-sn-glycerol + ATP = 1-octadecanoyl-2-(5Z,8Z,11Z,14Z-eicosatetraenoyl)-sn-glycero-3-phosphate + ADP + H(+). It carries out the reaction 1-eicosanoyl-2-(5Z,8Z,11Z,14Z)-eicosatetraenoyl-sn-glycerol + ATP = 1-eicosanoyl-2-(5Z,8Z,11Z,14Z)-eicosatetraenoyl-sn-glycero-3-phosphate + ADP + H(+). It catalyses the reaction 1,2-di-(5Z,8Z,11Z,14Z)-eicosatetraenoyl-sn-glycerol + ATP = 1,2-di-(5Z,8Z,11Z,14Z)-eicosatetraenoyl-sn-glycero-3-phosphate + ADP + H(+). The enzyme catalyses 1-octadecanoyl-2-(9Z,12Z)-octadecadienoyl-sn-glycerol + ATP = 1-octadecanoyl-2-(9Z,12Z-octadecadienoyl)-sn-glycero-3-phosphate + ADP + H(+). The catalysed reaction is 1,2-di-(9Z,12Z-octadecadienoyl)-sn-glycerol + ATP = 1,2-di-(9Z,12Z-octadecadienoyl)-sn-glycero-3-phosphate + ADP + H(+). It carries out the reaction 1,2-di-(9Z-octadecenoyl)-sn-glycerol + ATP = 1,2-di-(9Z-octadecenoyl)-sn-glycero-3-phosphate + ADP + H(+). The protein operates within lipid metabolism; glycerolipid metabolism. Functionally, membrane-bound diacylglycerol kinase that converts diacylglycerol/DAG into phosphatidic acid/phosphatidate/PA and regulates the respective levels of these two bioactive lipids. Thereby, acts as a central switch between the signaling pathways activated by these second messengers with different cellular targets and opposite effects in numerous biological processes. Also plays an important role in the biosynthesis of complex lipids. Displays specificity for diacylglycerol substrates with an arachidonoyl acyl chain at the sn-2 position, with the highest activity toward 1-octadecanoyl-2-(5Z,8Z,11Z,14Z-eicosatetraenoyl)-sn-glycerol the main diacylglycerol intermediate within the phosphatidylinositol turnover cycle. Can also phosphorylate diacylglycerol substrates with a linoleoyl acyl chain at the sn-2 position but much less efficiently. This chain is Diacylglycerol kinase epsilon (Dgke), found in Mus musculus (Mouse).